A 389-amino-acid polypeptide reads, in one-letter code: S-adenosylmethionine synthase (389 aa).

Histidine 17 provides a ligand contact to ATP. Residue aspartate 19 participates in Mg(2+) binding. Glutamate 45 contacts K(+). Residues glutamate 58 and glutamine 101 each coordinate L-methionine. A flexible loop region spans residues 101-111 (QSPDISQGVTE). Residues 168–170 (DSK), 234–235 (RF), aspartate 243, 249–250 (RK), alanine 266, and lysine 270 contribute to the ATP site. Aspartate 243 provides a ligand contact to L-methionine. Lysine 274 contacts L-methionine.

Belongs to the AdoMet synthase family. In terms of assembly, homotetramer; dimer of dimers. Requires Mg(2+) as cofactor. K(+) is required as a cofactor.

Its subcellular location is the cytoplasm. It carries out the reaction L-methionine + ATP + H2O = S-adenosyl-L-methionine + phosphate + diphosphate. It functions in the pathway amino-acid biosynthesis; S-adenosyl-L-methionine biosynthesis; S-adenosyl-L-methionine from L-methionine: step 1/1. Catalyzes the formation of S-adenosylmethionine (AdoMet) from methionine and ATP. The overall synthetic reaction is composed of two sequential steps, AdoMet formation and the subsequent tripolyphosphate hydrolysis which occurs prior to release of AdoMet from the enzyme. This chain is S-adenosylmethionine synthase, found in Syntrophotalea carbinolica (strain DSM 2380 / NBRC 103641 / GraBd1) (Pelobacter carbinolicus).